The sequence spans 244 residues: 7-cyano-7-deazaguanine synthase (244 aa).

Residue 14–24 coordinates ATP; that stretch reads FSGGQDSATCV. 4 residues coordinate Zn(2+): cysteine 202, cysteine 217, cysteine 220, and cysteine 223.

The protein belongs to the QueC family. Requires Zn(2+) as cofactor.

The enzyme catalyses 7-carboxy-7-deazaguanine + NH4(+) + ATP = 7-cyano-7-deazaguanine + ADP + phosphate + H2O + H(+). Its pathway is purine metabolism; 7-cyano-7-deazaguanine biosynthesis. Its function is as follows. Catalyzes the ATP-dependent conversion of 7-carboxy-7-deazaguanine (CDG) to 7-cyano-7-deazaguanine (preQ(0)). The chain is 7-cyano-7-deazaguanine synthase from Burkholderia mallei (strain NCTC 10229).